Here is a 130-residue protein sequence, read N- to C-terminus: Large ribosomal subunit protein bL19 (130 aa).

It belongs to the bacterial ribosomal protein bL19 family.

In terms of biological role, this protein is located at the 30S-50S ribosomal subunit interface and may play a role in the structure and function of the aminoacyl-tRNA binding site. The polypeptide is Large ribosomal subunit protein bL19 (Burkholderia ambifaria (strain ATCC BAA-244 / DSM 16087 / CCUG 44356 / LMG 19182 / AMMD) (Burkholderia cepacia (strain AMMD))).